The sequence spans 139 residues: Thyrotropin subunit beta (139 aa).

The signal sequence occupies residues 1–20 (MELSVAMCGLLCLLFSQAVP). 6 disulfides stabilise this stretch: Cys22-Cys72, Cys36-Cys87, Cys39-Cys127, Cys47-Cys103, Cys51-Cys105, and Cys108-Cys115. Asn43 carries N-linked (GlcNAc...) asparagine glycosylation.

The protein belongs to the glycoprotein hormones subunit beta family. As to quaternary structure, heterodimer of a common alpha chain and a unique beta chain which confers biological specificity to thyrotropin, lutropin, follitropin and gonadotropin.

The protein resides in the secreted. In terms of biological role, indispensable for the control of thyroid structure and metabolism. May play some role in the biological processes of the immature fishes. In Salmo salar (Atlantic salmon), this protein is Thyrotropin subunit beta (tshb).